Reading from the N-terminus, the 136-residue chain is Small ribosomal subunit protein bS6 (136 aa).

The interval 99–136 (QSEMLKAEENRSERRERRERPEHGGHEGLDGDSDKADE) is disordered. The segment covering 103–136 (LKAEENRSERRERRERPEHGGHEGLDGDSDKADE) has biased composition (basic and acidic residues).

It belongs to the bacterial ribosomal protein bS6 family.

Its function is as follows. Binds together with bS18 to 16S ribosomal RNA. The chain is Small ribosomal subunit protein bS6 from Azotobacter vinelandii (strain DJ / ATCC BAA-1303).